A 422-amino-acid polypeptide reads, in one-letter code: MPAGEQEREYNEDRKYYSKGVKLVRKKKKIPGYSWGDIKINIIGEKDDSPIHFCDKCDLPIKIYGRIIPCKHAFCYNCANLYDKIGYKICPRCSYPVLRIEEHKRGSVFMCSVVQGCKRTYLSQKSLQAHIKRRHKRARKQVASASLEKLRPHIAPPRTEIAEIPKRLLDRDHLNYIPPEQHTMMSLPSMQQMPHEQHNQPHKDLQVPPPELSPSPPFPIQWETVSVFTRKHGNLIVDHIQNNSDSGAKKPSPPDYYPEYQSQPVVSSPCHIMPQKQHYAPPPSPSSPVNYPMPYPPQDVGTPNLVSSQAPALTTTYDLSLGYIIAQVPPYMNSPPPCAPQSQNGNSSASEFAFHHYNPNFLTQFTENQETLSPQFTQTDATDHRRWPAWKGLPPPPPTWSPPPSTLHGGSHHSYQRRHRPY.

The segment at 54–94 adopts an RING-type zinc-finger fold; the sequence is CDKCDLPIKIYGRIIPCKHAFCYNCANLYDKIGYKICPRCS. The segment at 93–151 is HYB domain; it reads CSYPVLRIEEHKRGSVFMCSVVQGCKRTYLSQKSLQAHIKRRHKRARKQVASASLEKLR. The segment at 109–135 adopts a C2H2-type zinc-finger fold; the sequence is FMCSVVQGCKRTYLSQKSLQAHIKRRH. Disordered regions lie at residues 190 to 213 and 378 to 422; these read MQQM…PELS and QTDA…HRPY. A compositionally biased stretch (basic and acidic residues) spans 195–205; that stretch reads HEQHNQPHKDL. Over residues 393–405 the composition is skewed to pro residues; it reads LPPPPPTWSPPPS. The span at 410–422 shows a compositional bias: basic residues; it reads GSHHSYQRRHRPY.

Homodimer.

Its subcellular location is the cytoplasm. The enzyme catalyses S-ubiquitinyl-[E2 ubiquitin-conjugating enzyme]-L-cysteine + [acceptor protein]-L-lysine = [E2 ubiquitin-conjugating enzyme]-L-cysteine + N(6)-ubiquitinyl-[acceptor protein]-L-lysine.. Its pathway is protein modification; protein ubiquitination. In terms of biological role, E3 ubiquitin ligase catalyzing the covalent attachment of ubiquitin moieties onto substrate proteins. May operate on tyrosine-phosphorylated SRC substrates. The polypeptide is E3 ubiquitin-protein ligase CBLL2 (CBLL2) (Macaca fascicularis (Crab-eating macaque)).